Reading from the N-terminus, the 264-residue chain is Small ribosomal subunit protein uS2 (264 aa).

The interval Val-228–Glu-264 is disordered. The segment covering Val-234–Glu-264 has biased composition (acidic residues).

It belongs to the universal ribosomal protein uS2 family.

The chain is Small ribosomal subunit protein uS2 from Symbiobacterium thermophilum (strain DSM 24528 / JCM 14929 / IAM 14863 / T).